Reading from the N-terminus, the 319-residue chain is Taste receptor type 2 member 39 (319 aa).

Over 1–16 (MAQPSNYWKQDLLPLS) the chain is Extracellular. Residues 17–37 (ILILTLVATECTIGIIASGII) traverse the membrane as a helical segment. At 38-56 (TVVNAVSWVQKRAVSITTR) the chain is on the cytoplasmic side. The helical transmembrane segment at 57–77 (ILLLLSVSRIGLQSIILIEMT) threads the bilayer. Topologically, residues 78–97 (SSIFNFSSYNSVLYRVSRVS) are extracellular. N-linked (GlcNAc...) asparagine glycosylation is present at Asn82. The chain crosses the membrane as a helical span at residues 98 to 118 (FVFLNYCSLWFAALLSFFHFV). The Cytoplasmic portion of the chain corresponds to 119–137 (KIANFSYPLFFKLKWRISE). A helical transmembrane segment spans residues 138–158 (LMPWLLWLSVFISFSSSMFFC). The Extracellular portion of the chain corresponds to 159 to 187 (NHKYTVYNNISLSSNICNFTMELYVAEAN). 2 N-linked (GlcNAc...) asparagine glycosylation sites follow: Asn167 and Asn176. Residues 188-208 (VVNVAFLFSFGILPPLTMFIA) form a helical membrane-spanning segment. The Cytoplasmic portion of the chain corresponds to 209-247 (TATLLIFSLRRHTLHMRNGDADSRNPRVEAHKQAIKETS). The helical transmembrane segment at 248-268 (CFLFLYILYAAVLFLSTSNIA) threads the bilayer. Residues 269-273 (DASLF) lie on the Extracellular side of the membrane. The chain crosses the membrane as a helical span at residues 274 to 294 (WSSVLRISLPVYPAGHSVLLI). Topologically, residues 295 to 319 (QSNPGLKRTWKQLLSQIHLHLQSRY) are cytoplasmic.

Belongs to the G-protein coupled receptor T2R family.

The protein localises to the membrane. Putative taste receptor which may play a role in the perception of bitterness. This chain is Taste receptor type 2 member 39, found in Rattus norvegicus (Rat).